A 79-amino-acid polypeptide reads, in one-letter code: MSSCCGGKCGCGSVCSCGSGCNGCGMAPDLSYMEGSTTETLVMGVAPQKSHMEASEMGVAAENGCKCGDNCTCNPCNCK.

This sequence belongs to the metallothionein superfamily. Type 15 family.

Its function is as follows. Metallothioneins have a high content of cysteine residues that bind various heavy metals. The sequence is that of Metallothionein-like protein type 2 (MT1) from Malus domestica (Apple).